The chain runs to 635 residues: Biosynthetic arginine decarboxylase (635 aa).

Lys-103 carries the post-translational modification N6-(pyridoxal phosphate)lysine. A substrate-binding site is contributed by 283–293 (FDVGGGLGVDY).

This sequence belongs to the Orn/Lys/Arg decarboxylase class-II family. SpeA subfamily. The cofactor is Mg(2+). Pyridoxal 5'-phosphate is required as a cofactor.

The catalysed reaction is L-arginine + H(+) = agmatine + CO2. It functions in the pathway amine and polyamine biosynthesis; agmatine biosynthesis; agmatine from L-arginine: step 1/1. Functionally, catalyzes the biosynthesis of agmatine from arginine. This is Biosynthetic arginine decarboxylase from Proteus mirabilis (strain HI4320).